The primary structure comprises 832 residues: Sodium/hydrogen exchanger 3 (832 aa).

Residues Met-1–Gly-29 form the signal peptide. The Extracellular portion of the chain corresponds to Ala-30–His-50. Residues Val-51 to Leu-73 traverse the membrane as a helical segment. Over Ser-74–Val-81 the chain is Cytoplasmic. A helical membrane pass occupies residues Pro-82–Ala-101. Residues Asp-102–Thr-110 are Extracellular-facing. The chain crosses the membrane as a helical span at residues Pro-111–Tyr-128. Residues Phe-129–Pro-131 lie on the Cytoplasmic side of the membrane. A helical membrane pass occupies residues Asn-132–Ser-167. Gly-140 and Ser-141 together coordinate a 1,2-diacyl-sn-glycero-3-phospho-(1D-myo-inositol). The Extracellular portion of the chain corresponds to Gly-168–Phe-180. Residues Leu-181–Val-202 form a helical membrane-spanning segment. Topologically, residues His-203–Val-204 are cytoplasmic. A helical transmembrane segment spans residues Asn-205–Leu-236. Topologically, residues Gly-237–Gly-243 are extracellular. The helical transmembrane segment at Val-244–Thr-278 threads the bilayer. The Cytoplasmic segment spans residues Lys-279–His-280. The helical transmembrane segment at Val-281–Leu-303 threads the bilayer. At Ser-304 to Leu-305 the chain is on the extracellular side. A helical transmembrane segment spans residues Ser-306–Val-322. At Lys-323–Gln-329 the chain is on the cytoplasmic side. The helical transmembrane segment at Ser-330–Val-358 threads the bilayer. Topologically, residues Asp-359 to Asn-366 are extracellular. Residues Thr-367–Gln-388 traverse the membrane as a helical segment. The Cytoplasmic segment spans residues Thr-389–Glu-401. Met-397 serves as a coordination point for a 1,2-diacyl-sn-glycero-3-phospho-(1D-myo-inositol). Residues Leu-402–Leu-425 form a helical membrane-spanning segment. At Asp-426–Glu-432 the chain is on the extracellular side. The helical transmembrane segment at Lys-433–Arg-466 threads the bilayer. The Cytoplasmic segment spans residues Ser-467–Met-832. A 1,2-diacyl-sn-glycero-3-phospho-(1D-myo-inositol) is bound by residues Gln-496, Ile-497, and His-499. Residues Ser-554 and Ser-562 each carry the phosphoserine modification. The tract at residues Arg-575–Glu-589 is interaction with EZR. An interaction with NHERF4 region spans residues Ser-590–Ala-667. The interaction with AHCYL1 stretch occupies residues Ala-591–Pro-696. Phosphoserine occurs at positions 592 and 607. Ser-663 carries the phosphoserine; by SGK1 modification. Residues Phe-664–Ala-706 are disordered. Residues Lys-676–Asn-692 are compositionally biased toward basic residues. Residues Ser-719, Ser-813, and Ser-816 each carry the phosphoserine modification.

This sequence belongs to the monovalent cation:proton antiporter 1 (CPA1) transporter (TC 2.A.36) family. In terms of assembly, homodimer. Found in the forms of complex and dynamic macromolecular complexes. Interacts with CHP1; this interaction increases trafficking and activity at the plasma membrane of SLC9A3. Interacts with CHP2 and SHANK2. Interacts with NHERF4 and interaction decreases in response to elevated calcium ion levels. Binds NHERF1 and NHERF2. Interacts with PDZK1 (via C-terminal PDZ domain). Interacts with AHCYL1; interaction is required for SLC9A3 activity. Interacts with EZR; interaction targets SLC9A3 to the apical membrane. Interacts with SNX27 (via PDZ domains); directs SLC9A3 membrane insertion from early endosomes to the plasma membrane. Post-translationally, phosphorylated by PKA, which inhibits activity. Phosphorylation at Ser-663 by SGK1 is associated with increased abundance at the cell membrane and activity. Phosphorylation at Ser-719 by CSNK2A1 regulates SLC9A3 activity through the formation of multiple signaling complexes. In terms of tissue distribution, intestinal and kidney specific. Most abundant in kidney cortex, followed equally by ileum and ascending colon, then kidney medulla and jejunum. Is absent from duodenum and descending colon.

Its subcellular location is the apical cell membrane. The protein resides in the cell membrane. It is found in the recycling endosome membrane. The protein localises to the early endosome membrane. The catalysed reaction is Na(+)(in) + H(+)(out) = Na(+)(out) + H(+)(in). With respect to regulation, seems to switch between active and inactive modes in response to various stimuli. Activated directly or indirectly by membrane phosphatidylinositol (PIs). Regulated by a variety of auxiliary proteins, which facilitate the maturation, cell surface expression and function of the transporter. Inhibited specifically by the drug tenapanor. Functionally, plasma membrane Na(+)/H(+) antiporter. Exchanges intracellular H(+) ions for extracellular Na(+) in 1:1 stoichiometry, playing a key role in salt and fluid absorption and pH homeostasis. Major apical Na(+)/H(+) exchanger in kidney and intestine playing an important role in renal and intestine Na(+) absorption and blood pressure regulation. This is Sodium/hydrogen exchanger 3 (SLC9A3) from Oryctolagus cuniculus (Rabbit).